The following is a 228-amino-acid chain: Ribose-5-phosphate isomerase A (228 aa).

Substrate-binding positions include 26 to 29, 81 to 84, and 94 to 97; these read SGST, DGAD, and KGGG. Catalysis depends on glutamate 103, which acts as the Proton acceptor. Lysine 121 serves as a coordination point for substrate.

Belongs to the ribose 5-phosphate isomerase family. Homodimer.

It catalyses the reaction aldehydo-D-ribose 5-phosphate = D-ribulose 5-phosphate. Its pathway is carbohydrate degradation; pentose phosphate pathway; D-ribose 5-phosphate from D-ribulose 5-phosphate (non-oxidative stage): step 1/1. Functionally, catalyzes the reversible conversion of ribose-5-phosphate to ribulose 5-phosphate. The chain is Ribose-5-phosphate isomerase A from Shouchella clausii (strain KSM-K16) (Alkalihalobacillus clausii).